Consider the following 150-residue polypeptide: Nucleoside diphosphate kinase (150 aa).

Positions 10, 58, 86, 92, 103, and 113 each coordinate ATP. The Pros-phosphohistidine intermediate role is filled by H116.

The protein belongs to the NDK family. It depends on Mg(2+) as a cofactor.

The protein resides in the cytoplasm. It carries out the reaction a 2'-deoxyribonucleoside 5'-diphosphate + ATP = a 2'-deoxyribonucleoside 5'-triphosphate + ADP. The enzyme catalyses a ribonucleoside 5'-diphosphate + ATP = a ribonucleoside 5'-triphosphate + ADP. In terms of biological role, major role in the synthesis of nucleoside triphosphates other than ATP. The ATP gamma phosphate is transferred to the NDP beta phosphate via a ping-pong mechanism, using a phosphorylated active-site intermediate. This chain is Nucleoside diphosphate kinase, found in Methanobrevibacter smithii (strain ATCC 35061 / DSM 861 / OCM 144 / PS).